The chain runs to 358 residues: Vesicular integral-membrane protein VIP36 (358 aa).

The signal sequence occupies residues 1-46; sequence MAAEAWLWRWGWGWGQRCPGRPGLPGPGPSPTTFLHLLLLLGPVAA. Residues 47–324 lie on the Lumenal side of the membrane; sequence DITDGNSEHL…FRNGPLTGWR (278 aa). Residues 54–278 enclose the L-type lectin-like domain; sequence EHLKREHSLI…DIISIKLFQL (225 aa). Residues Ser-98 and Asp-133 each coordinate a carbohydrate. Asp-164, Tyr-166, and Asn-168 together coordinate Ca(2+). Position 166-168 (166-168) interacts with a carbohydrate; that stretch reads YPN. Asn-185 is a glycosylation site (N-linked (GlcNAc...) asparagine). His-192 is a binding site for a carbohydrate. Residue Asp-195 coordinates Ca(2+). An intrachain disulfide couples Cys-204 to Cys-241. 262-264 lines the a carbohydrate pocket; the sequence is GDL. The helical transmembrane segment at 325–347 threads the bilayer; the sequence is VFLLLLCALLGVVVCAVVGAVVF. Topologically, residues 348–358 are cytoplasmic; sequence QKRQERNKRFY.

Ca(2+) is required as a cofactor.

It localises to the golgi apparatus membrane. Plays a role as an intracellular lectin in the early secretory pathway. Interacts with N-acetyl-D-galactosamine and high-mannose type glycans and may also bind to O-linked glycans. Involved in the transport and sorting of glycoproteins carrying high mannose-type glycans. The chain is Vesicular integral-membrane protein VIP36 (Lman2) from Mus musculus (Mouse).